A 271-amino-acid polypeptide reads, in one-letter code: 5-deoxy-glucuronate isomerase (271 aa).

This sequence belongs to the isomerase IolB family.

The enzyme catalyses 5-deoxy-D-glucuronate = 5-dehydro-2-deoxy-D-gluconate. The protein operates within polyol metabolism; myo-inositol degradation into acetyl-CoA; acetyl-CoA from myo-inositol: step 4/7. Involved in the isomerization of 5-deoxy-glucuronate (5DG) to 5-dehydro-2-deoxy-D-gluconate (DKG or 2-deoxy-5-keto-D-gluconate). This Lacticaseibacillus casei (Lactobacillus casei) protein is 5-deoxy-glucuronate isomerase.